We begin with the raw amino-acid sequence, 420 residues long: MAKKTPGTNGKQKLFCSFCGKEQDAVKRLVAGPGVYICDECISLCNEIIAEDHEHSHEKSEVFSEIPNPVDIKSILDQYVIGQDHAKKALSVAVYNHYKRVNLKEKKSDVEIEKSNILLIGPTGSGKTLLAQTLARIIKVPFAIVDATALTEAGYVGEDVENIILKLIQNAENDIKKAEIGIIYIDEVDKIARKSDSASITRDVSGEGVQQALLKIIEGTIANVPPQGGRKHPHQEYLQVDTKNILFILGGAFVDLPNIIKSRTGVKTIGFGSEEQRIQAENKDTLMEQVIPEDLIKFGLIPEFIGRLPIVATLQELNVDMLKQIFREPKNSVLKQYTRLLELENVKLTFHEDAIDKIAELAIKRESGARGLRAIVENIMLDLMFDIPSRKDIEEVIITAEVITDRVTPTLILKKESKIA.

One can recognise a ClpX-type ZB domain in the interval 3–57 (KKTPGTNGKQKLFCSFCGKEQDAVKRLVAGPGVYICDECISLCNEIIAEDHEHSH). 4 residues coordinate Zn(2+): Cys-16, Cys-19, Cys-38, and Cys-41. Residue 122 to 129 (PTGSGKTL) coordinates ATP.

Belongs to the ClpX chaperone family. Component of the ClpX-ClpP complex. Forms a hexameric ring that, in the presence of ATP, binds to fourteen ClpP subunits assembled into a disk-like structure with a central cavity, resembling the structure of eukaryotic proteasomes.

Functionally, ATP-dependent specificity component of the Clp protease. It directs the protease to specific substrates. Can perform chaperone functions in the absence of ClpP. This Leptospira borgpetersenii serovar Hardjo-bovis (strain L550) protein is ATP-dependent Clp protease ATP-binding subunit ClpX.